A 39-amino-acid polypeptide reads, in one-letter code: Potassium channel toxin alpha-KTx 2.23 (39 aa).

3 cysteine pairs are disulfide-bonded: cysteine 7/cysteine 29, cysteine 13/cysteine 34, and cysteine 17/cysteine 36.

In terms of tissue distribution, expressed by the venom gland.

It is found in the secreted. Its function is as follows. Blocks human voltage-gated potassium (Kv) channels Kv1.1/KCNA1, Kv1.2/KCNA2 and Kv1.3/KCNA3. This chain is Potassium channel toxin alpha-KTx 2.23, found in Centruroides bonito (Scorpion).